Here is a 39-residue protein sequence, read N- to C-terminus: Cytochrome b559 subunit beta (39 aa).

Residues 14-30 (WLAVHGLAVPTVFFLGS) traverse the membrane as a helical segment. His-18 serves as a coordination point for heme.

The protein belongs to the PsbE/PsbF family. Heterodimer of an alpha subunit and a beta subunit. PSII is composed of 1 copy each of membrane proteins PsbA, PsbB, PsbC, PsbD, PsbE, PsbF, PsbH, PsbI, PsbJ, PsbK, PsbL, PsbM, PsbT, PsbX, PsbY, PsbZ, Psb30/Ycf12, at least 3 peripheral proteins of the oxygen-evolving complex and a large number of cofactors. It forms dimeric complexes. Requires heme b as cofactor.

It localises to the plastid. Its subcellular location is the chloroplast thylakoid membrane. This b-type cytochrome is tightly associated with the reaction center of photosystem II (PSII). PSII is a light-driven water:plastoquinone oxidoreductase that uses light energy to abstract electrons from H(2)O, generating O(2) and a proton gradient subsequently used for ATP formation. It consists of a core antenna complex that captures photons, and an electron transfer chain that converts photonic excitation into a charge separation. This is Cytochrome b559 subunit beta from Nicotiana glutinosa (Tobacco).